Reading from the N-terminus, the 314-residue chain is MAVLTTHEIDCIIKELTSLNGSECTLKEELIERLIQQTREVIKWQPMLLELQAPVNICGDIHGQFTDLLRIFKACGFPPKANYLFLGDYVDRGKQSLETICLLFAYKVKYPLNFFLLRGNHESASINKIYGFYDEIKRRHTVRLWHSFTDCFNWLPVAALVGERIFCCHGGLSPSLRNLQQINHIQRPTDIPDEGIMCDLLWADLNHTTKGWGHNDRGVSFTFDKVIVRDFLKAFDLQLMVRAHEVVEDGYEFFANRQLVTVFSAPNYCGMMNNAGGVMSVSTDLICSFVIILPCHKYKMIATDANQMPTNEEE.

Mn(2+)-binding residues include D60, H62, D88, and N120. The active-site Proton donor is H121. Mn(2+)-binding residues include H169 and H244.

Belongs to the PPP phosphatase family. PP-Y subfamily. Mn(2+) is required as a cofactor.

The catalysed reaction is O-phospho-L-seryl-[protein] + H2O = L-seryl-[protein] + phosphate. It catalyses the reaction O-phospho-L-threonyl-[protein] + H2O = L-threonyl-[protein] + phosphate. In Drosophila melanogaster (Fruit fly), this protein is Serine/threonine-protein phosphatase PP-Y (PpY-55A).